The following is a 461-amino-acid chain: Cysteine--tRNA ligase (461 aa).

Cys28 serves as a coordination point for Zn(2+). The 'HIGH' region signature appears at 30–40 (ITVYDLCHIGH). Zn(2+) is bound by residues Cys209, His234, and Glu238. The short motif at 266 to 270 (KMSKS) is the 'KMSKS' region element. Lys269 is a binding site for ATP.

The protein belongs to the class-I aminoacyl-tRNA synthetase family. As to quaternary structure, monomer. The cofactor is Zn(2+).

The protein resides in the cytoplasm. The enzyme catalyses tRNA(Cys) + L-cysteine + ATP = L-cysteinyl-tRNA(Cys) + AMP + diphosphate. This is Cysteine--tRNA ligase from Escherichia coli (strain 55989 / EAEC).